The chain runs to 277 residues: Thiazole synthase (277 aa).

K119 serves as the catalytic Schiff-base intermediate with DXP. Residues G180, 206 to 207 (AG), and 228 to 229 (NT) contribute to the 1-deoxy-D-xylulose 5-phosphate site.

This sequence belongs to the ThiG family. In terms of assembly, homotetramer. Forms heterodimers with either ThiH or ThiS.

Its subcellular location is the plastid. The protein localises to the chloroplast. It catalyses the reaction [ThiS sulfur-carrier protein]-C-terminal-Gly-aminoethanethioate + 2-iminoacetate + 1-deoxy-D-xylulose 5-phosphate = [ThiS sulfur-carrier protein]-C-terminal Gly-Gly + 2-[(2R,5Z)-2-carboxy-4-methylthiazol-5(2H)-ylidene]ethyl phosphate + 2 H2O + H(+). Its pathway is cofactor biosynthesis; thiamine diphosphate biosynthesis. Its function is as follows. Catalyzes the rearrangement of 1-deoxy-D-xylulose 5-phosphate (DXP) to produce the thiazole phosphate moiety of thiamine. Sulfur is provided by the thiocarboxylate moiety of the carrier protein ThiS. In vitro, sulfur can be provided by H(2)S. The polypeptide is Thiazole synthase (Pyropia yezoensis (Susabi-nori)).